A 95-amino-acid chain; its full sequence is MNLKPLADRVIVKPAPAEEKTKGGLYIPDTGKEKPQYGEVVAVGAGKVADSGQLLEMQVAVGNKVLYGKYSGTEVAVEGEDYLIMRESDIFAILD.

This sequence belongs to the GroES chaperonin family. In terms of assembly, heptamer of 7 subunits arranged in a ring. Interacts with the chaperonin GroEL.

Its subcellular location is the cytoplasm. Its function is as follows. Together with the chaperonin GroEL, plays an essential role in assisting protein folding. The GroEL-GroES system forms a nano-cage that allows encapsulation of the non-native substrate proteins and provides a physical environment optimized to promote and accelerate protein folding. GroES binds to the apical surface of the GroEL ring, thereby capping the opening of the GroEL channel. This chain is Co-chaperonin GroES, found in Chlorobium phaeobacteroides (strain BS1).